The primary structure comprises 222 residues: Uridine diphosphate glucose pyrophosphatase NUDT14 (222 aa).

Residues 38-206 enclose the Nudix hydrolase domain; the sequence is KTHDSVTVLL…DIPKTLGVIF (169 aa). Residues 111-129 carry the Nudix box motif; sequence PGLSLEEVACKEAWEECGY.

This sequence belongs to the Nudix hydrolase family. In terms of assembly, homodimer. The cofactor is Mg(2+).

The protein resides in the cytoplasm. It catalyses the reaction UDP-sugar + H2O = UMP + alpha-D-aldose 1-phosphate.. Its function is as follows. Hydrolyzes UDP-glucose to glucose 1-phosphate and UMP and ADP-ribose to ribose 5-phosphate and AMP. The physiological substrate is probably UDP-glucose. Poor activity on other substrates such as ADP-glucose, CDP-glucose, GDP-glucose and GDP-mannose. This Homo sapiens (Human) protein is Uridine diphosphate glucose pyrophosphatase NUDT14 (NUDT14).